The primary structure comprises 78 residues: Small ribosomal subunit protein uS17 (78 aa).

It belongs to the universal ribosomal protein uS17 family. As to quaternary structure, part of the 30S ribosomal subunit.

Its function is as follows. One of the primary rRNA binding proteins, it binds specifically to the 5'-end of 16S ribosomal RNA. This is Small ribosomal subunit protein uS17 from Maricaulis maris (strain MCS10) (Caulobacter maris).